Consider the following 855-residue polypeptide: Valine--tRNA ligase (855 aa).

Residues 44-54 carry the 'HIGH' region motif; that stretch reads PNVTGVLHIGH. The short motif at 524-528 is the 'KMSKS' region element; that stretch reads KMSKT. Residue lysine 527 coordinates ATP. Residues 797-827 are a coiled coil; it reads KVEEDPARKQKEREQLEKNIANSKRQLGDEV.

This sequence belongs to the class-I aminoacyl-tRNA synthetase family. ValS type 1 subfamily. As to quaternary structure, monomer.

It is found in the cytoplasm. The enzyme catalyses tRNA(Val) + L-valine + ATP = L-valyl-tRNA(Val) + AMP + diphosphate. In terms of biological role, catalyzes the attachment of valine to tRNA(Val). As ValRS can inadvertently accommodate and process structurally similar amino acids such as threonine, to avoid such errors, it has a 'posttransfer' editing activity that hydrolyzes mischarged Thr-tRNA(Val) in a tRNA-dependent manner. The protein is Valine--tRNA ligase of Solibacter usitatus (strain Ellin6076).